The following is a 687-amino-acid chain: Putative ammonium transporter 3 (687 aa).

A run of 11 helical transmembrane segments spans residues 39 to 59 (AVWI…FGLL), 77 to 97 (VVDV…FSYG), 134 to 154 (ASFL…SGAV), 162 to 182 (SYIL…HWVW), 196 to 216 (FAGC…ATVF), 240 to 260 (LGTF…VWGI), 272 to 292 (AVAT…ISFV), 299 to 319 (VNFL…ICAV), 323 to 343 (WHAL…LPLL), 352 to 372 (VGIV…VGIF), and 404 to 424 (CTAA…FLIS). 3 disordered regions span residues 521–544 (RTNA…FNNQ), 549–568 (AVSS…RRTE), and 592–687 (PPEE…NPPV). Residues 549 to 564 (AVSSTVSTARNGPSTG) show a composition bias toward polar residues. Composition is skewed to low complexity over residues 614-632 (SPSS…SPSI) and 648-665 (STAS…KNST).

Belongs to the ammonia transporter channel (TC 1.A.11.2) family.

It localises to the membrane. Involved in the uptake of ammonia. The polypeptide is Putative ammonium transporter 3 (amt-3) (Caenorhabditis elegans).